Reading from the N-terminus, the 408-residue chain is Phosphoglycerate kinase (408 aa).

Residues D28–N30, R43, H66–R69, R123, and R163 each bind substrate. ATP contacts are provided by residues E334 and G358–T361.

The protein belongs to the phosphoglycerate kinase family. Monomer.

It is found in the cytoplasm. It catalyses the reaction (2R)-3-phosphoglycerate + ATP = (2R)-3-phospho-glyceroyl phosphate + ADP. It participates in carbohydrate degradation; glycolysis; pyruvate from D-glyceraldehyde 3-phosphate: step 2/5. The protein is Phosphoglycerate kinase of Pyrobaculum aerophilum (strain ATCC 51768 / DSM 7523 / JCM 9630 / CIP 104966 / NBRC 100827 / IM2).